We begin with the raw amino-acid sequence, 694 residues long: Prolyl 3-hydroxylase 2 (694 aa).

The first 23 residues, 1–23 (MAPGSRSWGAVLLLAAMLPAACG), serve as a signal peptide directing secretion. 4 TPR repeats span residues 35-68 (FDALYASGVEAYYGGDFAGAARCLEQALRSRREL), 136-169 (RVPYSYLQRAYIQLNKLEEAANAAHTFFMANPEH), 196-229 (HMEDYSAGVRHYDKEEYGLAITFLERALEGYYAE), and 292-325 (PLHYDYLQFAYYRVGDYVKALECARSYLLFHPDD). Positions 386–418 (KRYGARQDEHSVPSSISSEPEDGPRLSLTKKPT) form a coiled coil. The interval 395-427 (HSVPSSISSEPEDGPRLSLTKKPTPKPDRELKE) is disordered. Asn-446 and Asn-535 each carry an N-linked (GlcNAc...) asparagine glycan. The Fe2OG dioxygenase domain occupies 543 to 657 (THLVCRTALS…RCAVALWFTL (115 aa)). His-566, Asp-568, and His-638 together coordinate Fe cation. Arg-648 is an active-site residue. Positions 691-694 (KDEL) match the Prevents secretion from ER motif.

This sequence belongs to the leprecan family. Requires Fe cation as cofactor. It depends on L-ascorbate as a cofactor.

Its subcellular location is the endoplasmic reticulum. The protein localises to the sarcoplasmic reticulum. It is found in the golgi apparatus. The catalysed reaction is L-prolyl-[collagen] + 2-oxoglutarate + O2 = trans-3-hydroxy-L-prolyl-[collagen] + succinate + CO2. Prolyl 3-hydroxylase that catalyzes the post-translational formation of 3-hydroxyproline on collagens. Contributes to proline 3-hydroxylation of collagen COL4A1 and COL1A1 in tendons, the eye sclera and in the eye lens capsule. Has high activity with the type IV collagen COL4A1, and lower activity with COL1A1. Catalyzes hydroxylation of the first Pro in Gly-Pro-Hyp sequences where Hyp is 4-hydroxyproline. Has no activity on substrates that lack 4-hydroxyproline in the third position. The chain is Prolyl 3-hydroxylase 2 from Gallus gallus (Chicken).